Reading from the N-terminus, the 245-residue chain is Cysteine-rich secretory protein 3 (245 aa).

The N-terminal stretch at 1–22 (MALLPVLLFLAAVLLPFFPASG) is a signal peptide. Residues 42–171 (VNKHNDLRRT…TLKYYYVCQY (130 aa)) enclose the SCP domain. Intrachain disulfides connect Cys191/Cys198, Cys194/Cys203, Cys207/Cys240, Cys216/Cys234, and Cys225/Cys238. The ShKT domain maps to 207–240 (CEYEDLVSNCDSLKKIAGCEHELLKENCKTTCQC).

It belongs to the CRISP family. In terms of assembly, interacts with A1BG. Expressed in the salivary gland, in the ampulla and the seminal vesicle.

The protein localises to the secreted. The chain is Cysteine-rich secretory protein 3 (CRISP3) from Equus caballus (Horse).